The following is an 804-amino-acid chain: Protein SEY1 homolog 1 (804 aa).

Topologically, residues 1–638 (MEQIITGEGQ…SVLASQNNEH (638 aa)) are cytoplasmic. The region spanning 28 to 245 (GTDYHMVSII…EENYLFKEKS (218 aa)) is the GB1/RHD3-type G domain. A GTP-binding site is contributed by 38 to 45 (GCQSSGKS). The helical transmembrane segment at 639–659 (IPPWAWFLFLFSCSDYILWWL) threads the bilayer. The Lumenal segment spans residues 660–662 (SNP). The helical transmembrane segment at 663-683 (LLFSLTVLFGGTYLVLNQLGL) threads the bilayer. Topologically, residues 684-804 (WDTAVQKLLD…RKRVRVGTLV (121 aa)) are cytoplasmic. The tract at residues 706-804 (PDENNETETN…RKRVRVGTLV (99 aa)) is disordered. Positions 751-791 (QGLTKTESNVTFANVSNANDEQSLTKNNTEDSLNTGSSSSG) are enriched in polar residues. The span at 792-804 (QRHRKRVRVGTLV) shows a compositional bias: basic residues.

The protein belongs to the TRAFAC class dynamin-like GTPase superfamily. GB1/RHD3 GTPase family. RHD3 subfamily.

The protein localises to the endoplasmic reticulum membrane. In terms of biological role, probable GTP-binding protein that may be involved in cell development. This Trichomonas vaginalis (strain ATCC PRA-98 / G3) protein is Protein SEY1 homolog 1.